Here is a 25-residue protein sequence, read N- to C-terminus: IWLTALKFLGKNLGKHLAKQQLAKL.

L25 carries the leucine amide modification.

As to expression, expressed by the venom gland.

The protein localises to the secreted. In terms of biological role, has antimicrobial activity against Gram-positive bacterium S.aureus (MIC=3.79 uM), Gram-negative bacterium E.coli (MIC=7.81 uM) and yeasts C.krusei (MIC=26.3 uM) and C.neoformans (MIC=13.2 uM). Has hemolytic activity against rabbit erythrocytes. Forms pores in lipid bilayers in vitro; pore formation is reduced when cholesterol is present in the bilayers. This is Toxin LyeTx 1 from Lycosa erythrognatha (Wolf spider).